Reading from the N-terminus, the 818-residue chain is MSWMRKALLSVFHYPVKLLVKAHSIPVNVETELGIDKSKPIVYLLPTNSVTDQLSLRMSTQALDLPSPTKTLTLAGREYSSTLFLRKTQPLFRSSAKDTGIEEVFTDLFHLHRDHENLDLQVVPVYVTWGRAPGRGNPGLSDLIADKAAPSWLRKLFIVLFLGRDNFINYSKAVSARAMSNQHGSDQSIAHKLVRVASTHFQRKRQSMTGPTLLERQELNNSVLGSDAVRRAIAEESRSKKVSHDKAKACAQSYITEIAADYREGLIRFGDRLLTRIWNKIYNGISVGHAERIRELAANGHEIIYVPCHRSHMDYLLLTYVIYHEGMVTPHIAAGINLNFWPVGKMFRRGGAFFLRRSFAGNKLYTAVFREYLELLFNKGYSVKYYPEGGRSRTGRLIPPKTGMLAITIQAMLKGVNRPVSIVPVYIGYENVMEVKSYLNELKGSKKKKESNLQVFSAIRKLKNYGHGYVNFGEPIALNQFLESHVPNWRDCKDAEPEKKPAWLTPAVNELANNVMTRINRAAALNGMALTSLCLLSSKTQTMSEAELKQSIGDFMDLFKAVPFSDDATIPDSTAEALLRDTLKLGRFDIKEDDYGRLISPQPKSAVYLTYYRNNILHLFAIPGLVMASVFAKKGTTKNDILQLIAALYPLLQKELFLHLTQDEALAHTDALVTALLNNGLLRQKDKELLPPDAHCKQFHSAWLLSRCMQETLQRYAVVLTILDKEKVISRGALERESKQVAERLSALYGLSSPEFYDKNVLSSFIGALKENHWLDSEKDGSLKYSEECEALRQDVMALIWPEMMQHLENVALNGQTN.

The HXXXXD motif signature appears at 308–313; it reads CHRSHM.

This sequence belongs to the GPAT/DAPAT family.

It is found in the cell inner membrane. It catalyses the reaction sn-glycerol 3-phosphate + an acyl-CoA = a 1-acyl-sn-glycero-3-phosphate + CoA. It participates in phospholipid metabolism; CDP-diacylglycerol biosynthesis; CDP-diacylglycerol from sn-glycerol 3-phosphate: step 1/3. This is Glycerol-3-phosphate acyltransferase from Alteromonas mediterranea (strain DSM 17117 / CIP 110805 / LMG 28347 / Deep ecotype).